The chain runs to 444 residues: Trigger factor (444 aa).

A PPIase FKBP-type domain is found at 165 to 250 (GDFAKFDFEG…LHEIQELKIP (86 aa)).

This sequence belongs to the FKBP-type PPIase family. Tig subfamily.

It localises to the cytoplasm. It carries out the reaction [protein]-peptidylproline (omega=180) = [protein]-peptidylproline (omega=0). Functionally, involved in protein export. Acts as a chaperone by maintaining the newly synthesized protein in an open conformation. Functions as a peptidyl-prolyl cis-trans isomerase. This is Trigger factor (tig) from Campylobacter jejuni subsp. jejuni serotype O:2 (strain ATCC 700819 / NCTC 11168).